A 1266-amino-acid chain; its full sequence is 5-oxoprolinase 1 (1266 aa).

This sequence belongs to the oxoprolinase family. As to expression, expressed in roots, stems, leaves, flowers and siliques.

The protein localises to the cytoplasm. It catalyses the reaction 5-oxo-L-proline + ATP + 2 H2O = L-glutamate + ADP + phosphate + H(+). In terms of biological role, catalyzes the cleavage of 5-oxo-L-proline to form L-glutamate coupled to the hydrolysis of ATP to ADP and inorganic phosphate. Acts in the glutathione degradation pathway. The sequence is that of 5-oxoprolinase 1 from Arabidopsis thaliana (Mouse-ear cress).